Consider the following 349-residue polypeptide: Thiamine-phosphate synthase (349 aa).

Residues 1 to 125 (MGCESSLDPR…SAEAAAIRYG (125 aa)) form a unknown region. The interval 63 to 85 (RARSTVTDPGAGMEHPAQLDRHS) is disordered. The segment at 126–349 (LYDLEVTCLT…LLSSLSRPTL (224 aa)) is thiamine-phosphate synthase. 4-amino-2-methyl-5-(diphosphooxymethyl)pyrimidine contacts are provided by residues 177–181 (QHRCK) and N209. D210 and D229 together coordinate Mg(2+). 4-amino-2-methyl-5-(diphosphooxymethyl)pyrimidine is bound by residues S248 and K277. G304 lines the 2-[(2R,5Z)-2-carboxy-4-methylthiazol-5(2H)-ylidene]ethyl phosphate pocket.

This sequence belongs to the thiamine-phosphate synthase family. Requires Mg(2+) as cofactor.

The enzyme catalyses 2-[(2R,5Z)-2-carboxy-4-methylthiazol-5(2H)-ylidene]ethyl phosphate + 4-amino-2-methyl-5-(diphosphooxymethyl)pyrimidine + 2 H(+) = thiamine phosphate + CO2 + diphosphate. It carries out the reaction 2-(2-carboxy-4-methylthiazol-5-yl)ethyl phosphate + 4-amino-2-methyl-5-(diphosphooxymethyl)pyrimidine + 2 H(+) = thiamine phosphate + CO2 + diphosphate. The catalysed reaction is 4-methyl-5-(2-phosphooxyethyl)-thiazole + 4-amino-2-methyl-5-(diphosphooxymethyl)pyrimidine + H(+) = thiamine phosphate + diphosphate. It participates in cofactor biosynthesis; thiamine diphosphate biosynthesis; thiamine phosphate from 4-amino-2-methyl-5-diphosphomethylpyrimidine and 4-methyl-5-(2-phosphoethyl)-thiazole: step 1/1. Condenses 4-methyl-5-(beta-hydroxyethyl)thiazole monophosphate (THZ-P) and 2-methyl-4-amino-5-hydroxymethyl pyrimidine pyrophosphate (HMP-PP) to form thiamine monophosphate (TMP). This Parasynechococcus marenigrum (strain WH8102) protein is Thiamine-phosphate synthase.